Here is a 635-residue protein sequence, read N- to C-terminus: Chaperone protein HtpG (635 aa).

The interval 1-344 is a; substrate-binding; the sequence is MSETATTNKE…SNDLPLNVSR (344 aa). A b region spans residues 345 to 561; it reads EILQDNKITQ…DYEMGTQMAK (217 aa). Residues 562 to 635 form a c region; the sequence is LLAAAGQPVP…AVNQLLAPSH (74 aa).

This sequence belongs to the heat shock protein 90 family. As to quaternary structure, homodimer.

The protein localises to the cytoplasm. Functionally, molecular chaperone. Has ATPase activity. The polypeptide is Chaperone protein HtpG (Vibrio cholerae serotype O1 (strain ATCC 39541 / Classical Ogawa 395 / O395)).